Reading from the N-terminus, the 711-residue chain is Ribosomal RNA large subunit methyltransferase K/L (711 aa).

The THUMP domain occupies 43–154 (LGYRITLWSR…RGQITIGLNF (112 aa)).

Belongs to the methyltransferase superfamily. RlmKL family.

It is found in the cytoplasm. It catalyses the reaction guanosine(2445) in 23S rRNA + S-adenosyl-L-methionine = N(2)-methylguanosine(2445) in 23S rRNA + S-adenosyl-L-homocysteine + H(+). The catalysed reaction is guanosine(2069) in 23S rRNA + S-adenosyl-L-methionine = N(2)-methylguanosine(2069) in 23S rRNA + S-adenosyl-L-homocysteine + H(+). Its function is as follows. Specifically methylates the guanine in position 2445 (m2G2445) and the guanine in position 2069 (m7G2069) of 23S rRNA. The polypeptide is Ribosomal RNA large subunit methyltransferase K/L (Shewanella woodyi (strain ATCC 51908 / MS32)).